The chain runs to 421 residues: Synaptotagmin-12 (421 aa).

The Vesicular portion of the chain corresponds to 1-18; that stretch reads MAVDVAEYHLSVIKSPPG. A helical transmembrane segment spans residues 19–39; the sequence is WEVGVYAAGALALLGIAAVSL. At 40-421 the chain is on the cytoplasmic side; it reads WKLWTSGSFP…VSMWHAVRRN (382 aa). Residues Ser97, Ser99, and Ser214 each carry the phosphoserine modification. C2 domains lie at 152-272 and 283-416; these read TLGQ…SGWL and AVGE…SMWH.

This sequence belongs to the synaptotagmin family. In terms of assembly, homodimer. Can also form heterodimers. Interacts with SYT1. Post-translationally, phosphorylation of Ser-97 is required for mossy-fiber long-term potentiation.

The protein localises to the cytoplasmic vesicle. It is found in the secretory vesicle. It localises to the synaptic vesicle membrane. Functionally, synaptic vesicle phosphoprotein that enhances spontaneous neurotransmitter release but does not effect induced neurotransmitter release. Unlike other synaptotagmins, it does not bind Ca(2+) or phospholipids. Essential for mossy-fiber long-term potentiation in the hippocampus. In Homo sapiens (Human), this protein is Synaptotagmin-12 (SYT12).